A 557-amino-acid chain; its full sequence is Dihydroxy-acid dehydratase (557 aa).

Cysteine 50 contributes to the [2Fe-2S] cluster binding site. Aspartate 82 lines the Mg(2+) pocket. Cysteine 123 is a [2Fe-2S] cluster binding site. The Mg(2+) site is built by aspartate 124 and lysine 125. An N6-carboxylysine modification is found at lysine 125. [2Fe-2S] cluster is bound at residue cysteine 195. Glutamate 447 contributes to the Mg(2+) binding site. Serine 473 serves as the catalytic Proton acceptor.

This sequence belongs to the IlvD/Edd family. Homodimer. The cofactor is [2Fe-2S] cluster. Requires Mg(2+) as cofactor.

It carries out the reaction (2R)-2,3-dihydroxy-3-methylbutanoate = 3-methyl-2-oxobutanoate + H2O. The enzyme catalyses (2R,3R)-2,3-dihydroxy-3-methylpentanoate = (S)-3-methyl-2-oxopentanoate + H2O. It participates in amino-acid biosynthesis; L-isoleucine biosynthesis; L-isoleucine from 2-oxobutanoate: step 3/4. Its pathway is amino-acid biosynthesis; L-valine biosynthesis; L-valine from pyruvate: step 3/4. In terms of biological role, functions in the biosynthesis of branched-chain amino acids. Catalyzes the dehydration of (2R,3R)-2,3-dihydroxy-3-methylpentanoate (2,3-dihydroxy-3-methylvalerate) into 2-oxo-3-methylpentanoate (2-oxo-3-methylvalerate) and of (2R)-2,3-dihydroxy-3-methylbutanoate (2,3-dihydroxyisovalerate) into 2-oxo-3-methylbutanoate (2-oxoisovalerate), the penultimate precursor to L-isoleucine and L-valine, respectively. This chain is Dihydroxy-acid dehydratase, found in Nitrosomonas eutropha (strain DSM 101675 / C91 / Nm57).